Consider the following 480-residue polypeptide: MTQQDGGQAGQAEPTKLWGGRFASGPAEAMAALSLSTHFDWRLAPYDIAGSRAHTRVLHKAGLLTADELERMLAGLDVLAADVESGAFQPVIDDEDVHTALERGLLERVGPELGGKLRAGRSRNDQVATLFRMWLRDAVRRVTSGVLDVVDALTAQAAAHPDAVLPGRTHLQHAQPVLLAHHLLAHCQSLLRDVSRLRDWDARTAFSPYGSGALAGSSLGLDPQAVAAELGFDGGAVDNSIDGTASRDFAAEAAFCLAMLGVNLSRVAEEVIIWNTAEFGYVTLDDAWATGSSIMPQKKNPDVAELARGKSGRLVGNLTGLLATLKAQPLAYNRDLQEDKEPVFDSVEQLDLLLPAMAGMLGTLTFHTERLAELAPAGFTLATDIAEWLVRQGVPFRVAHEASGECVRKAEARGAGLDELTDSELAATHPALTPEVREVLTVGGSIASRDAHGGTAPARVAEQRERVVATVAGHRQWLAG.

Positions 1–20 (MTQQDGGQAGQAEPTKLWGG) are disordered.

Belongs to the lyase 1 family. Argininosuccinate lyase subfamily.

The protein resides in the cytoplasm. It catalyses the reaction 2-(N(omega)-L-arginino)succinate = fumarate + L-arginine. It functions in the pathway amino-acid biosynthesis; L-arginine biosynthesis; L-arginine from L-ornithine and carbamoyl phosphate: step 3/3. The sequence is that of Argininosuccinate lyase from Saccharopolyspora erythraea (strain ATCC 11635 / DSM 40517 / JCM 4748 / NBRC 13426 / NCIMB 8594 / NRRL 2338).